The chain runs to 339 residues: Putative P2Y purinoceptor 10 (339 aa).

At 1–39 (MANLDKYTETFKMGSNSTSTAEIYCNVTNVKFQYSLYAT) the chain is on the extracellular side. N-linked (GlcNAc...) asparagine glycans are attached at residues N16 and N26. A helical transmembrane segment spans residues 40–60 (TYILIFIPGLLANSAALWVLC). Over 61 to 68 (RFISKKNK) the chain is Cytoplasmic. Residues 69-89 (AIIFMINLSVADLAHVLSLPL) traverse the membrane as a helical segment. At 90 to 103 (RIYYYISHHWPFQR) the chain is on the extracellular side. The chain crosses the membrane as a helical span at residues 104–124 (ALCLLCFYLKYLNMYASICFL). A disulfide bridge connects residues C106 and C181. Residues 125 to 149 (TCISLQRCFFLLKPFRARDWKRRYD) are Cytoplasmic-facing. A helical transmembrane segment spans residues 150–170 (VGISAAIWIVVGTACLPFPIL). The Extracellular portion of the chain corresponds to 171–193 (RSTDLNNNKSCFADLGYKQMNAV). N-linked (GlcNAc...) asparagine glycosylation is present at N178. The chain crosses the membrane as a helical span at residues 194–214 (ALVGMITVAELAGFVIPVIII). Residues 215-244 (AWCTWKTTISLRQPPMAFQGISERQKALRM) lie on the Cytoplasmic side of the membrane. Residues 245 to 265 (VFMCAAVFFICFTPYHINFIF) traverse the membrane as a helical segment. At 266 to 288 (YTMVKETIISSCPVVRIALYFHP) the chain is on the extracellular side. The helical transmembrane segment at 289–309 (FCLCLASLCCLLDPILYYFMA) threads the bilayer. The Cytoplasmic segment spans residues 310–339 (SEFRDQLSRHGSSVTRSRLMSKESGSSMIG).

Belongs to the G-protein coupled receptor 1 family. Weakly expressed in blood leukocytes.

The protein localises to the cell membrane. In terms of biological role, putative receptor for purines coupled to G-proteins. This is Putative P2Y purinoceptor 10 (P2RY10) from Homo sapiens (Human).